The following is a 367-amino-acid chain: E3 ubiquitin-protein ligase RGLG3 (367 aa).

Residues 37–257 (NLILGIDFTK…KEAAFALAAL (221 aa)) enclose the VWFA domain. The RING-type zinc finger occupies 323-356 (CPICLTNPKDMAFSCGHTTCKECGVVITTCPLCR).

As to quaternary structure, interacts with UBC30, GRXS17 and GLB3. Binds to and coactivates GAF1/IDD2 and ENY/IDD1. As to expression, widely expressed.

It localises to the cytoplasm. The protein localises to the nucleus. The enzyme catalyses S-ubiquitinyl-[E2 ubiquitin-conjugating enzyme]-L-cysteine + [acceptor protein]-L-lysine = [E2 ubiquitin-conjugating enzyme]-L-cysteine + N(6)-ubiquitinyl-[acceptor protein]-L-lysine.. Its function is as follows. Possesses E3 ubiquitin-protein ligase in vitro. Acts as upstream modulator of jasmonate (JA) signaling in response to various stimuli, such as JA-inhibited root growth, JA-inductive gene expression, coronatine-mediated pathogen susceptibility, wound-stimulated expression of JA-responsive genes and wound-induced JA biosynthesis. Controls fumonisin B1 (FB1)-triggered programmed cell death (PCD) by modulating the JA signaling pathway. May mediate salicylic acid (SA) suppression of JA signaling in FB1-induced responses. May mediate the formation of 'Lys-48'-linked multiubiquitin chains. Mediates the polyubiquitination and subsequent proteasomal degradation of the target protein GRXS17. The sequence is that of E3 ubiquitin-protein ligase RGLG3 from Arabidopsis thaliana (Mouse-ear cress).